We begin with the raw amino-acid sequence, 255 residues long: 5'-nucleotidase SurE (255 aa).

Residues Asp8, Asp9, Ser40, and Asn92 each contribute to the a divalent metal cation site.

This sequence belongs to the SurE nucleotidase family. A divalent metal cation serves as cofactor.

Its subcellular location is the cytoplasm. The enzyme catalyses a ribonucleoside 5'-phosphate + H2O = a ribonucleoside + phosphate. Functionally, nucleotidase that shows phosphatase activity on nucleoside 5'-monophosphates. This chain is 5'-nucleotidase SurE, found in Brucella abortus (strain S19).